We begin with the raw amino-acid sequence, 307 residues long: N-acetylmuramic acid 6-phosphate etherase (307 aa).

Positions 62–225 (IVSSFNRGGR…STASMIRIGK (164 aa)) constitute an SIS domain. Glu90 acts as the Proton donor in catalysis. Glu121 is a catalytic residue.

The protein belongs to the GCKR-like family. MurNAc-6-P etherase subfamily. As to quaternary structure, homodimer.

The enzyme catalyses N-acetyl-D-muramate 6-phosphate + H2O = N-acetyl-D-glucosamine 6-phosphate + (R)-lactate. It functions in the pathway amino-sugar metabolism; 1,6-anhydro-N-acetylmuramate degradation. Its pathway is amino-sugar metabolism; N-acetylmuramate degradation. The protein operates within cell wall biogenesis; peptidoglycan recycling. Functionally, specifically catalyzes the cleavage of the D-lactyl ether substituent of MurNAc 6-phosphate, producing GlcNAc 6-phosphate and D-lactate. Together with AnmK, is also required for the utilization of anhydro-N-acetylmuramic acid (anhMurNAc) either imported from the medium or derived from its own cell wall murein, and thus plays a role in cell wall recycling. The chain is N-acetylmuramic acid 6-phosphate etherase from Pseudoalteromonas atlantica (strain T6c / ATCC BAA-1087).